The sequence spans 209 residues: Translation initiation factor IF-3 (209 aa).

It belongs to the IF-3 family. Monomer.

The protein localises to the cytoplasm. Functionally, IF-3 binds to the 30S ribosomal subunit and shifts the equilibrium between 70S ribosomes and their 50S and 30S subunits in favor of the free subunits, thus enhancing the availability of 30S subunits on which protein synthesis initiation begins. This Chlorobium phaeobacteroides (strain DSM 266 / SMG 266 / 2430) protein is Translation initiation factor IF-3.